The following is a 543-amino-acid chain: CTP synthase (543 aa).

Positions 1 to 265 (MARYIFITGG…DDEVLAAFAI (265 aa)) are amidoligase domain. Serine 13 is a CTP binding site. UTP is bound at residue serine 13. 14–19 (SLGKGL) lines the ATP pocket. L-glutamine is bound at residue tyrosine 54. Aspartate 71 provides a ligand contact to ATP. The Mg(2+) site is built by aspartate 71 and glutamate 139. CTP contacts are provided by residues 146–148 (DIE), 186–191 (KTKPTQ), and lysine 222. UTP contacts are provided by residues 186–191 (KTKPTQ) and lysine 222. 238–240 (RDA) lines the ATP pocket. The Glutamine amidotransferase type-1 domain occupies 291–542 (TIAIVGKYTG…IEAALVRSRL (252 aa)). Position 353 (glycine 353) interacts with L-glutamine. The active-site Nucleophile; for glutamine hydrolysis is the cysteine 380. L-glutamine contacts are provided by residues 381–384 (FGMQ), glutamate 404, and arginine 470. Residues histidine 515 and glutamate 517 contribute to the active site.

It belongs to the CTP synthase family. Homotetramer.

The enzyme catalyses UTP + L-glutamine + ATP + H2O = CTP + L-glutamate + ADP + phosphate + 2 H(+). It carries out the reaction L-glutamine + H2O = L-glutamate + NH4(+). The catalysed reaction is UTP + NH4(+) + ATP = CTP + ADP + phosphate + 2 H(+). It functions in the pathway pyrimidine metabolism; CTP biosynthesis via de novo pathway; CTP from UDP: step 2/2. Its activity is regulated as follows. Allosterically activated by GTP, when glutamine is the substrate; GTP has no effect on the reaction when ammonia is the substrate. The allosteric effector GTP functions by stabilizing the protein conformation that binds the tetrahedral intermediate(s) formed during glutamine hydrolysis. Inhibited by the product CTP, via allosteric rather than competitive inhibition. Catalyzes the ATP-dependent amination of UTP to CTP with either L-glutamine or ammonia as the source of nitrogen. Regulates intracellular CTP levels through interactions with the four ribonucleotide triphosphates. The chain is CTP synthase from Rhodopseudomonas palustris (strain HaA2).